The primary structure comprises 655 residues: Gastrulation defective protein 1 homolog (655 aa).

Disordered regions lie at residues 1-54 (MQRG…EQMI) and 83-165 (AKVF…DEQS). Composition is skewed to basic and acidic residues over residues 23 to 36 (RSNETEAEDAKEST), 91 to 115 (QIEKARVTRPGMDKKREESKPKEDD), and 134 to 146 (TDKEKATKESSKD). Positions 147–164 (EDSDDDDYSSDEDSDDEQ) are enriched in acidic residues. WD repeat units lie at residues 180 to 219 (HGSRAVLALAGDPSGARLVSGSIDYDMCFWDFAGMDSSMR), 227 to 268 (CENH…ECCK), 281 to 321 (GHVA…EQLQ), 330 to 369 (GLRTNAASCNFNRDATLIAAGCVDGSIQTWDTRKMFVNTT), 377 to 416 (QKGSEITSIVFSYMGQQLATRSNDETMKLWDLRQFKQPLH), 422 to 467 (FSRY…EVQR), and 470 to 510 (VSNA…RGAK). 2 disordered regions span residues 544-580 (KSRTSRKRMEKARMDPVKSQRPDLPITSGQGGRVASS) and 633-655 (AIFSEKLPADEPATKKPKTEADK). Composition is skewed to basic and acidic residues over residues 554-564 (KARMDPVKSQR) and 639-655 (LPADEPATKKPKTEADK).

It belongs to the WD repeat GAD-1 family.

The sequence is that of Gastrulation defective protein 1 homolog from Drosophila melanogaster (Fruit fly).